A 224-amino-acid chain; its full sequence is 7-cyano-7-deazaguanine synthase (224 aa).

12–22 (LSGGLDSSTVT) provides a ligand contact to ATP. Zn(2+)-binding residues include Cys193, Cys201, Cys204, and Cys207.

This sequence belongs to the QueC family. Requires Zn(2+) as cofactor.

The enzyme catalyses 7-carboxy-7-deazaguanine + NH4(+) + ATP = 7-cyano-7-deazaguanine + ADP + phosphate + H2O + H(+). Its pathway is purine metabolism; 7-cyano-7-deazaguanine biosynthesis. Catalyzes the ATP-dependent conversion of 7-carboxy-7-deazaguanine (CDG) to 7-cyano-7-deazaguanine (preQ(0)). This is 7-cyano-7-deazaguanine synthase from Prochlorococcus marinus (strain AS9601).